The following is a 44-amino-acid chain: MKMTFQPKKRQRAKVHGFRQRMKTAGGRKVIAARRLKGRKKLSA.

Residues 1 to 26 (MKMTFQPKKRQRAKVHGFRQRMKTAG) are disordered. Basic residues predominate over residues 7–22 (PKKRQRAKVHGFRQRM).

Belongs to the bacterial ribosomal protein bL34 family.

This chain is Large ribosomal subunit protein bL34, found in Agathobacter rectalis (strain ATCC 33656 / DSM 3377 / JCM 17463 / KCTC 5835 / VPI 0990) (Eubacterium rectale).